The primary structure comprises 374 residues: N5-carboxyaminoimidazole ribonucleotide synthase (374 aa).

ATP contacts are provided by residues arginine 108, lysine 148, 153–159 (GYDGKGQ), 183–186 (EKYL), glutamate 191, histidine 214, and 266–267 (NE). The ATP-grasp domain maps to 112-296 (KETLKSAGTK…QFDTHILAVT (185 aa)).

This sequence belongs to the PurK/PurT family. Homodimer.

It catalyses the reaction 5-amino-1-(5-phospho-beta-D-ribosyl)imidazole + hydrogencarbonate + ATP = 5-carboxyamino-1-(5-phospho-D-ribosyl)imidazole + ADP + phosphate + 2 H(+). It participates in purine metabolism; IMP biosynthesis via de novo pathway; 5-amino-1-(5-phospho-D-ribosyl)imidazole-4-carboxylate from 5-amino-1-(5-phospho-D-ribosyl)imidazole (N5-CAIR route): step 1/2. In terms of biological role, catalyzes the ATP-dependent conversion of 5-aminoimidazole ribonucleotide (AIR) and HCO(3)(-) to N5-carboxyaminoimidazole ribonucleotide (N5-CAIR). This is N5-carboxyaminoimidazole ribonucleotide synthase from Staphylococcus aureus (strain MRSA252).